A 280-amino-acid chain; its full sequence is Hydroxyethylthiazole kinase (280 aa).

Met-50 serves as a coordination point for substrate. 2 residues coordinate ATP: Lys-125 and Thr-178. Gly-205 serves as a coordination point for substrate.

This sequence belongs to the Thz kinase family. Mg(2+) is required as a cofactor.

The enzyme catalyses 5-(2-hydroxyethyl)-4-methylthiazole + ATP = 4-methyl-5-(2-phosphooxyethyl)-thiazole + ADP + H(+). It functions in the pathway cofactor biosynthesis; thiamine diphosphate biosynthesis; 4-methyl-5-(2-phosphoethyl)-thiazole from 5-(2-hydroxyethyl)-4-methylthiazole: step 1/1. Catalyzes the phosphorylation of the hydroxyl group of 4-methyl-5-beta-hydroxyethylthiazole (THZ). This is Hydroxyethylthiazole kinase from Lacticaseibacillus paracasei (strain ATCC 334 / BCRC 17002 / CCUG 31169 / CIP 107868 / KCTC 3260 / NRRL B-441) (Lactobacillus paracasei).